Here is a 111-residue protein sequence, read N- to C-terminus: Large ribosomal subunit protein uL23 (111 aa).

Belongs to the universal ribosomal protein uL23 family. In terms of assembly, part of the 50S ribosomal subunit. Contacts protein L29, and trigger factor when it is bound to the ribosome.

One of the early assembly proteins it binds 23S rRNA. One of the proteins that surrounds the polypeptide exit tunnel on the outside of the ribosome. Forms the main docking site for trigger factor binding to the ribosome. This chain is Large ribosomal subunit protein uL23, found in Nitrosospira multiformis (strain ATCC 25196 / NCIMB 11849 / C 71).